The primary structure comprises 73 residues: Alpha-bungarotoxin N3 (73 aa).

Intrachain disulfides connect Cys-3–Cys-23, Cys-16–Cys-43, Cys-28–Cys-32, Cys-47–Cys-58, and Cys-59–Cys-64.

The protein belongs to the three-finger toxin family. Long-chain subfamily. Type II alpha-neurotoxin sub-subfamily. In terms of assembly, monomer in solution, homodimer in crystal state. In terms of tissue distribution, expressed by the venom gland.

The protein resides in the secreted. Its function is as follows. Binds with high affinity to muscular (alpha-1/CHRNA1) and neuronal (alpha-7/CHRNA7) nicotinic acetylcholine receptor (nAChR) and inhibits acetylcholine from binding to the receptor, thereby impairing neuromuscular and neuronal transmission. Mice injected with this toxin develop flaccid paralysis followed by death. Irreversibly inhibits twitches in a concentration-dependent manner in rat phrenic nerve-hemidiaphragm and chick biventer cervicis muscle. The chain is Alpha-bungarotoxin N3 from Bungarus candidus (Malayan krait).